The following is a 1338-amino-acid chain: Apoptotic chromatin condensation inducer in the nucleus (1338 aa).

Residues 1 to 57 (MWGRKRPNSSGETRGILSGNRGVDYGSGRGQSGPFEGRWRKLPKMPEAVGTDPSTSR) are disordered. The SAP domain maps to 72 to 106 (LQALRVTDLKAALEQRGLAKSGQKSALVKRLKGAL). Residues Ser132, Ser166, Ser169, Ser208, Ser210, and Ser216 each carry the phosphoserine modification. The interval 155–866 (EAREAAELEE…ATQKKPSISI (712 aa)) is disordered. Positions 161 to 171 (ELEEASAESED) are enriched in acidic residues. Over residues 219-228 (EKPRKGERRS) the composition is skewed to basic and acidic residues. At Ser242 the chain carries Phosphoserine. The residue at position 253 (Thr253) is a Phosphothreonine. A Glycyl lysine isopeptide (Lys-Gly) (interchain with G-Cter in SUMO1) cross-link involves residue Lys267. The segment covering 269-290 (EEEEEEEEEEEDDDDEEEEEVD) has biased composition (acidic residues). Residue Ser295 is modified to Phosphoserine. A compositionally biased stretch (basic and acidic residues) spans 313–353 (ERTRAKPEKVVDEKPLNIRSQEKGELEKGGRVTRSQEEARR). Lys318 is covalently cross-linked (Glycyl lysine isopeptide (Lys-Gly) (interchain with G-Cter in SUMO2)). Phosphoserine is present on residues Ser332 and Ser369. A Glycyl lysine isopeptide (Lys-Gly) (interchain with G-Cter in SUMO2) cross-link involves residue Lys378. Residues Ser387, Ser389, Ser391, and Ser413 each carry the phosphoserine modification. Thr417 and Thr423 each carry phosphothreonine. Over residues 425-434 (EASSPPTHIQ) the composition is skewed to polar residues. Ser454, Ser477, Ser479, Ser491, and Ser497 each carry phosphoserine. The span at 506–518 (QKSSLPECSTQKG) shows a compositional bias: polar residues. Over residues 542-559 (ITEEPMKKQSLEQKEGRR) the composition is skewed to basic and acidic residues. A Phosphoserine modification is found at Ser561. 2 stretches are compositionally biased toward low complexity: residues 573–603 (SADS…ASRP) and 646–662 (RSAS…GVSR). Lys654 carries the N6,N6,N6-trimethyllysine; by EHMT2; alternate modification. Residue Lys654 is modified to N6,N6-dimethyllysine; by EHMT2; alternate. Residues Ser655, Ser657, Ser710, and Ser729 each carry the phosphoserine modification. A Glycyl lysine isopeptide (Lys-Gly) (interchain with G-Cter in SUMO2) cross-link involves residue Lys732. The span at 744–754 (TQPQTSETQIS) shows a compositional bias: polar residues. Composition is skewed to basic and acidic residues over residues 757–767 (LESERTHHTVE) and 798–815 (NDER…KESS). Ser825 and Ser838 each carry phosphoserine. Residues 855–866 (TAATQKKPSISI) are compositionally biased toward polar residues. Position 861 is an N6-acetyllysine; alternate (Lys861). A Glycyl lysine isopeptide (Lys-Gly) (interchain with G-Cter in SUMO2); alternate cross-link involves residue Lys861. Residue Lys879 forms a Glycyl lysine isopeptide (Lys-Gly) (interchain with G-Cter in SUMO2) linkage. The span at 892-915 (ADDSRISEDETERNGDDGTHDKGL) shows a compositional bias: basic and acidic residues. The interval 892-950 (ADDSRISEDETERNGDDGTHDKGLKICRTVTQVVPAEGQENGQREEEEEKEPEAELPAP) is disordered. A phosphoserine mark is found at Ser895 and Ser898. The span at 936–945 (EEEEEKEPEA) shows a compositional bias: acidic residues. Residue Lys969 forms a Glycyl lysine isopeptide (Lys-Gly) (interchain with G-Cter in SUMO2) linkage. Thr975 is modified (phosphothreonine). Ser986, Ser989, and Ser1003 each carry phosphoserine. Residues Lys1046 and Lys1106 each participate in a glycyl lysine isopeptide (Lys-Gly) (interchain with G-Cter in SUMO2) cross-link. 2 disordered regions span residues 1104–1214 (ETKA…DDLF) and 1226–1338 (LPLT…GGRR). Over residues 1115-1129 (PLHPPPPPPVQPPPH) the composition is skewed to pro residues. Over residues 1130–1174 (PRAEQREQERAVREQWAEREREMERRERTRSEREWDRDKVREGPR) the composition is skewed to basic and acidic residues. Basic residues predominate over residues 1175 to 1192 (SRSRSRDRRRKERAKSKE). A Phosphoserine; by SRPK2 and PKB/AKT1 modification is found at Ser1179. Basic and acidic residues-rich tracts occupy residues 1193-1214 (KKSE…DDLF) and 1236-1317 (KEAE…DRRD). The sufficient for interaction with RNPS1 and SAP18 and formation of the ASAP complex stretch occupies residues 1209-1236 (LLDDLFRKTKAAPCIYWLPLTESQIVQK).

As to quaternary structure, found in a mRNA splicing-dependent exon junction complex (EJC). Component of the heterotrimeric ASAP (apoptosis- and splicing-associated protein) complexes consisting of RNPS1, SAP18 and different isoforms of ACIN1; the association of SAP18 seems to require a preformed RNPS1:ACIN1 complex. Interacts with API5. Interacts with SRPK2 in a phosphorylation-dependent manner. Undergoes proteolytic cleavage; the processed form is active, contrary to the uncleaved form. In terms of processing, phosphorylation on Ser-1179 by SRPK2 up-regulates its stimulatory effect on cyclin A1.

It is found in the nucleus. The protein resides in the nucleus speckle. The protein localises to the nucleoplasm. Its function is as follows. Auxiliary component of the splicing-dependent multiprotein exon junction complex (EJC) deposited at splice junction on mRNAs. The EJC is a dynamic structure consisting of core proteins and several peripheral nuclear and cytoplasmic associated factors that join the complex only transiently either during EJC assembly or during subsequent mRNA metabolism. Component of the ASAP complexes which bind RNA in a sequence-independent manner and are proposed to be recruited to the EJC prior to or during the splicing process and to regulate specific excision of introns in specific transcription subsets; ACIN1 confers RNA-binding to the complex. The ASAP complex can inhibit RNA processing during in vitro splicing reactions. The ASAP complex promotes apoptosis and is disassembled after induction of apoptosis. Involved in the splicing modulation of BCL2L1/Bcl-X (and probably other apoptotic genes); specifically inhibits formation of proapoptotic isoforms such as Bcl-X(S); the activity is different from the established EJC assembly and function. Induces apoptotic chromatin condensation after activation by CASP3. Regulates cyclin A1, but not cyclin A2, expression in leukemia cells. This is Apoptotic chromatin condensation inducer in the nucleus (Acin1) from Mus musculus (Mouse).